We begin with the raw amino-acid sequence, 970 residues long: Phosphoenolpyruvate carboxylase 1 (970 aa).

Ser15 bears the Phosphoserine mark. Active-site residues include His177, Lys606, and Arg647.

Belongs to the PEPCase type 1 family. In terms of assembly, homotetramer. Mg(2+) is required as a cofactor.

It is found in the cytoplasm. It carries out the reaction oxaloacetate + phosphate = phosphoenolpyruvate + hydrogencarbonate. It participates in photosynthesis; C4 acid pathway. With respect to regulation, by light-reversible phosphorylation. Through the carboxylation of phosphoenolpyruvate (PEP) it forms oxaloacetate, a four-carbon dicarboxylic acid source for the tricarboxylic acid cycle. The protein is Phosphoenolpyruvate carboxylase 1 (PEP1) of Zea mays (Maize).